A 148-amino-acid polypeptide reads, in one-letter code: Arginine repressor (148 aa).

Belongs to the ArgR family.

Its subcellular location is the cytoplasm. The protein operates within amino-acid biosynthesis; L-arginine biosynthesis [regulation]. Its function is as follows. Regulates arginine biosynthesis genes. This is Arginine repressor from Acidobacterium capsulatum (strain ATCC 51196 / DSM 11244 / BCRC 80197 / JCM 7670 / NBRC 15755 / NCIMB 13165 / 161).